A 458-amino-acid chain; its full sequence is UDP-N-acetylmuramate--L-alanine ligase (458 aa).

Residue G118–T124 participates in ATP binding.

This sequence belongs to the MurCDEF family.

It localises to the cytoplasm. It carries out the reaction UDP-N-acetyl-alpha-D-muramate + L-alanine + ATP = UDP-N-acetyl-alpha-D-muramoyl-L-alanine + ADP + phosphate + H(+). It participates in cell wall biogenesis; peptidoglycan biosynthesis. Functionally, cell wall formation. The sequence is that of UDP-N-acetylmuramate--L-alanine ligase from Clostridium botulinum (strain Okra / Type B1).